Reading from the N-terminus, the 353-residue chain is Deoxyribonuclease-2-alpha (353 aa).

Residues 1-19 (MATLRSLLLAALLWVPAEA) form the signal peptide. A disulfide bridge links cysteine 22 with cysteine 161. Residues asparagine 71, asparagine 88, asparagine 214, and asparagine 268 are each glycosylated (N-linked (GlcNAc...) asparagine). Cystine bridges form between cysteine 269-cysteine 349 and cysteine 310-cysteine 329. Histidine 297 is an active-site residue.

Belongs to the DNase II family. As to expression, highly expressed in fetal liver macrophages.

The protein resides in the lysosome. The catalysed reaction is Endonucleolytic cleavage to nucleoside 3'-phosphates and 3'-phosphooligonucleotide end-products.. Its function is as follows. Hydrolyzes DNA under acidic conditions with a preference for double-stranded DNA. Plays a major role in the clearance of nucleic acids generated through apoptosis, hence preventing autoinflammation. Necessary for proper fetal development and for definitive erythropoiesis in fetal liver and bone marrow, where it degrades nuclear DNA expelled from erythroid precursor cells. This Mus musculus (Mouse) protein is Deoxyribonuclease-2-alpha (Dnase2).